A 449-amino-acid chain; its full sequence is UDP-N-acetylmuramoylalanine--D-glutamate ligase (449 aa).

119-125 provides a ligand contact to ATP; sequence GSNGKTT.

The protein belongs to the MurCDEF family.

The protein resides in the cytoplasm. It catalyses the reaction UDP-N-acetyl-alpha-D-muramoyl-L-alanine + D-glutamate + ATP = UDP-N-acetyl-alpha-D-muramoyl-L-alanyl-D-glutamate + ADP + phosphate + H(+). The protein operates within cell wall biogenesis; peptidoglycan biosynthesis. Functionally, cell wall formation. Catalyzes the addition of glutamate to the nucleotide precursor UDP-N-acetylmuramoyl-L-alanine (UMA). In Streptococcus suis (strain 98HAH33), this protein is UDP-N-acetylmuramoylalanine--D-glutamate ligase.